The chain runs to 816 residues: Protein kinase C-binding protein NELL2 (816 aa).

An N-terminal signal peptide occupies residues 1–21 (MESRVLLRTFCLLFGLGAVWG). The 229-residue stretch at 30–258 (IDVLTELELG…AKTSAKLSRA (229 aa)) folds into the Laminin G-like domain. N-linked (GlcNAc...) asparagine glycans are attached at residues N53, N225, N293, and N298. Positions 272–331 (RTCTMKGTTYREFESWTDGCKNCTCLNGTIQCETLICPNPDCPLKSAPAYVDGKCCKECK) constitute a VWFC 1 domain. Residues 397–439 (GYDFCSERHNCMENSVCRNLNDRAVCSCRDGFRALREDNAYCE) enclose the EGF-like 1 domain. Disulfide bonds link C401–C413, C407–C422, and C424–C438. The Ca(2+) site is built by D440, I441, and E443. The region spanning 440–481 (DIDECAEGRHYCRENTMCVNTPGSFMCICKTGYIRIDDYSCT) is the EGF-like 2; calcium-binding domain. 9 cysteine pairs are disulfide-bonded: C444–C457, C451–C466, C468–C480, C486–C499, C493–C508, C510–C521, C525–C535, C529–C541, and C543–C552. Residues N459, T460, and S463 each contribute to the Ca(2+) site. Residues 482-522 (EHDECVTNQHNCDENALCFNTVGGHNCVCKPGYTGNGTTCK) enclose the EGF-like 3; calcium-binding domain. Residue N517 is glycosylated (N-linked (GlcNAc...) asparagine). The region spanning 523-553 (AFCQDGCRNGGACIAANVCACPQGFTGHSCE) is the EGF-like 4 domain. T548 carries O-linked (GlcNAc...) threonine glycosylation. Residues D555, I556, and E558 each contribute to the Ca(2+) site. One can recognise an EGF-like 5; calcium-binding domain in the interval 555 to 601 (DIDECSDGFVQCDSRANCINLPGWYHCECRDGYHDNGMFSPSGESCE). Intrachain disulfides connect C559–C572, C566–C581, and C583–C600. Ca(2+) is bound by residues N574, L575, and W578. Ca(2+) contacts are provided by D602, I603, and E605. Positions 602–637 (DIDECGTGRHSCANDTICFNLDGGYDCRCPHGKNCT) constitute an EGF-like 6; calcium-binding domain. 3 disulfide bridges follow: C606-C619, C613-C628, and C630-C636. A glycan (N-linked (GlcNAc...) asparagine) is linked at N615. Residues N621, L622, and G625 each coordinate Ca(2+). N635 is a glycosylation site (N-linked (GlcNAc...) asparagine). 2 VWFC domains span residues 638–693 (GDCI…PECD) and 698–756 (SQCL…PRCV).

As to quaternary structure, homotrimer. Binds to PRKCB. Interacts with NICOL1; this interaction triggers epididymal differentiation.

It localises to the secreted. Its function is as follows. Plays multiple roles in neural tissues, regulates neuronal proliferation, survival, differentiation, polarization, as well as axon guidance and synaptic functions. Plays an important role in axon development during neuronal differentiation through the MAPK intracellular signaling pathway. Via binding to its receptor ROBO3, plays a role in axon guidance, functions as a repulsive guidance cue for commissural axons, helping to steer them across the spinal cord midline. Required for neuron survival through the modulation of MAPK signaling pathways too. Involved in the regulation of hypothalamic GNRH secretion and the control of puberty. Testicular luminal protein that signals through a ROS1-pathway to regulate the epididymal initial segment (IS) maturation, sperm maturation and male fertility. This is Protein kinase C-binding protein NELL2 (NELL2) from Bos taurus (Bovine).